Reading from the N-terminus, the 155-residue chain is S-ribosylhomocysteine lyase (155 aa).

Residues H53, H57, and C121 each coordinate Fe cation.

It belongs to the LuxS family. Homodimer. It depends on Fe cation as a cofactor.

The catalysed reaction is S-(5-deoxy-D-ribos-5-yl)-L-homocysteine = (S)-4,5-dihydroxypentane-2,3-dione + L-homocysteine. Its function is as follows. Involved in the synthesis of autoinducer 2 (AI-2) which is secreted by bacteria and is used to communicate both the cell density and the metabolic potential of the environment. The regulation of gene expression in response to changes in cell density is called quorum sensing. Catalyzes the transformation of S-ribosylhomocysteine (RHC) to homocysteine (HC) and 4,5-dihydroxy-2,3-pentadione (DPD). This chain is S-ribosylhomocysteine lyase, found in Thermus thermophilus (strain ATCC BAA-163 / DSM 7039 / HB27).